Here is a 126-residue protein sequence, read N- to C-terminus: uncharacterized protein (126 aa).

This is an uncharacterized protein from Salmonella typhi.